A 728-amino-acid chain; its full sequence is MSNETKCPFNHTAGSGTTNKDWWPNQLNLNVLHRHSALSDPMDPDFDYAEAFKKLDLAAVKQDLHALMTTSQDWWPADFGHYGGLFVRMAWHSAGTYRTADGRGGAGGGQQRFAPLNSWPDNVSLDKARRLLWPIKQKYGRNISWADLLILTGNVALESMGFKTFGYAGGRVDTWEPDDVYWGSEKIWLELSGGPNSRYTGKRELESPLAAVQMGLIYVNPEGPDGNPDPVAAAHDIRETFARMAMNDEETVALIAGGHTFGKTHGAGPASNVGPEPEAAGLEEQGLGWKSTFGTGKGKDTITSGLEVTWTSTPTKWSNDFFKHLFSYEWELTKSPAGAHQWVAKDADEVIPDAYDASKKHRPTMLTTDLSLRFDPAYEKISRRFYENPAEFADAFARAWFKLTHRDMGPRSRYLGPEVPAEHLLWQDPIPAVDHPLIDDADVAALKAKVLATGLSVSQLVSTAWASAATFRGSDKRGGANGARIRLAPQKDWEVNQPAALAAVLEALEGVQKAFNDAQTGGKKVSLADLIVLAGAAGVEQAAKNAGIAITVPFAPGRMDASQEETDVDAMAVLEPLADGFRNYLKHPYKTPAEALLVDKAQLLTLTAPEMTVLVGGLRVLGANVGDSKHGVFTDRPGTLSNDFFANLLDMRTEWKPVSAANDVFEGRDRATGAVKWTGTRVDLIFGSHSQLRALAEVYGSADAQEKFVRDFVAAWNKVMNLDRFDLA.

The segment at residues 91-218 is a cross-link (tryptophyl-tyrosyl-methioninium (Trp-Tyr) (with M-244)); the sequence is WHSAGTYRTA…LAAVQMGLIY (128 aa). H92 functions as the Proton acceptor in the catalytic mechanism. Residues 218 to 244 constitute a cross-link (tryptophyl-tyrosyl-methioninium (Tyr-Met) (with W-91)); it reads YVNPEGPDGNPDPVAAAHDIRETFARM. H259 is a binding site for heme b.

Belongs to the peroxidase family. Peroxidase/catalase subfamily. Homodimer or homotetramer. Heme b is required as a cofactor. Post-translationally, formation of the three residue Trp-Tyr-Met cross-link is important for the catalase, but not the peroxidase activity of the enzyme.

It catalyses the reaction H2O2 + AH2 = A + 2 H2O. It carries out the reaction 2 H2O2 = O2 + 2 H2O. Its function is as follows. Bifunctional enzyme with both catalase and broad-spectrum peroxidase activity. The polypeptide is Catalase-peroxidase 1 (Burkholderia cenocepacia (strain ATCC BAA-245 / DSM 16553 / LMG 16656 / NCTC 13227 / J2315 / CF5610) (Burkholderia cepacia (strain J2315))).